The following is a 296-amino-acid chain: 4-hydroxybenzoate octaprenyltransferase (296 aa).

Transmembrane regions (helical) follow at residues P28–G48, L52–I72, A102–A122, Y146–A166, G169–Y189, V219–F239, L241–W261, and F275–L295.

It belongs to the UbiA prenyltransferase family. The cofactor is Mg(2+).

The protein localises to the cell inner membrane. It carries out the reaction all-trans-octaprenyl diphosphate + 4-hydroxybenzoate = 4-hydroxy-3-(all-trans-octaprenyl)benzoate + diphosphate. It participates in cofactor biosynthesis; ubiquinone biosynthesis. Functionally, catalyzes the prenylation of para-hydroxybenzoate (PHB) with an all-trans polyprenyl group. Mediates the second step in the final reaction sequence of ubiquinone-8 (UQ-8) biosynthesis, which is the condensation of the polyisoprenoid side chain with PHB, generating the first membrane-bound Q intermediate 3-octaprenyl-4-hydroxybenzoate. This chain is 4-hydroxybenzoate octaprenyltransferase, found in Pseudomonas fluorescens (strain ATCC BAA-477 / NRRL B-23932 / Pf-5).